We begin with the raw amino-acid sequence, 157 residues long: Small ribosomal subunit protein uS7 (157 aa).

It belongs to the universal ribosomal protein uS7 family. Part of the 30S ribosomal subunit. Contacts proteins S9 and S11.

One of the primary rRNA binding proteins, it binds directly to 16S rRNA where it nucleates assembly of the head domain of the 30S subunit. Is located at the subunit interface close to the decoding center, probably blocks exit of the E-site tRNA. The polypeptide is Small ribosomal subunit protein uS7 (Chlamydia trachomatis serovar L2 (strain ATCC VR-902B / DSM 19102 / 434/Bu)).